The sequence spans 331 residues: Ketol-acid reductoisomerase (NADP(+)) (331 aa).

A KARI N-terminal Rossmann domain is found at Ala-2–Thr-182. Residues Tyr-25–Gln-28, Ser-51, Ser-53, and Asp-83–Gln-86 each bind NADP(+). Residue His-108 is part of the active site. NADP(+) is bound at residue Gly-134. The region spanning Asn-183–Leu-328 is the KARI C-terminal knotted domain. Residues Asp-191, Glu-195, Glu-227, and Glu-231 each coordinate Mg(2+). Ser-252 serves as a coordination point for substrate.

It belongs to the ketol-acid reductoisomerase family. Mg(2+) serves as cofactor.

It carries out the reaction (2R)-2,3-dihydroxy-3-methylbutanoate + NADP(+) = (2S)-2-acetolactate + NADPH + H(+). The catalysed reaction is (2R,3R)-2,3-dihydroxy-3-methylpentanoate + NADP(+) = (S)-2-ethyl-2-hydroxy-3-oxobutanoate + NADPH + H(+). It functions in the pathway amino-acid biosynthesis; L-isoleucine biosynthesis; L-isoleucine from 2-oxobutanoate: step 2/4. The protein operates within amino-acid biosynthesis; L-valine biosynthesis; L-valine from pyruvate: step 2/4. Its function is as follows. Involved in the biosynthesis of branched-chain amino acids (BCAA). Catalyzes an alkyl-migration followed by a ketol-acid reduction of (S)-2-acetolactate (S2AL) to yield (R)-2,3-dihydroxy-isovalerate. In the isomerase reaction, S2AL is rearranged via a Mg-dependent methyl migration to produce 3-hydroxy-3-methyl-2-ketobutyrate (HMKB). In the reductase reaction, this 2-ketoacid undergoes a metal-dependent reduction by NADPH to yield (R)-2,3-dihydroxy-isovalerate. The chain is Ketol-acid reductoisomerase (NADP(+)) from Prochlorococcus marinus (strain MIT 9211).